The sequence spans 361 residues: Aurora kinase B-A (361 aa).

The Protein kinase domain maps to 93–343 (FDIGRPLGKG…LKGVMEHPWV (251 aa)). Residues 99–107 (LGKGKFGNV) and Lys-122 contribute to the ATP site. Asp-216 acts as the Proton acceptor in catalysis.

Belongs to the protein kinase superfamily. Ser/Thr protein kinase family. Aurora subfamily. In terms of assembly, component of the CPC at least composed of survivin/birc5, incenp, cdca8/borealin and/or cdca9/dasra-A, and aurkb/aurora-B. Interacts directly (via N-terminus and kinase domain) with incenp (via C terminus), and may weakly interact (via N-terminus) with birc5.1 to stabilize the complex. Interacts with mtus1. Mg(2+) serves as cofactor. Post-translationally, phosphorylated, stimulates kinase activity.

The protein localises to the nucleus. It localises to the chromosome. It catalyses the reaction L-seryl-[protein] + ATP = O-phospho-L-seryl-[protein] + ADP + H(+). The enzyme catalyses L-threonyl-[protein] + ATP = O-phospho-L-threonyl-[protein] + ADP + H(+). Kinase activity is stimulated by both birc5/survivin-binding and cell-cycle specific phosphorylation. Its function is as follows. Serine/threonine-protein kinase component of the chromosomal passenger complex (CPC), a complex that acts as a key regulator of mitosis. The CPC complex has essential functions at the centromere in ensuring correct chromosome alignment and segregation and is required for chromatin-induced microtubule stabilization and spindle assembly. Involved in the bipolar attachment of spindle microtubules to kinetochores and is a key regulator for the onset of cytokinesis during mitosis. Required for central/midzone spindle assembly and cleavage furrow formation. Key component of the cytokinesis checkpoint, a process required to delay abscission to prevent both premature resolution of intercellular chromosome bridges and accumulation of DNA damage. Phosphorylates 'Ser-10' of histone H3 during mitosis. The sequence is that of Aurora kinase B-A (aurkb-a) from Xenopus laevis (African clawed frog).